The primary structure comprises 214 residues: Large ribosomal subunit protein bL25 (214 aa).

Residues 189–214 (IHASRKAKADEDEAAEGEEGEEGAED) are disordered. The segment covering 198–214 (DEDEAAEGEEGEEGAED) has biased composition (acidic residues).

This sequence belongs to the bacterial ribosomal protein bL25 family. CTC subfamily. As to quaternary structure, part of the 50S ribosomal subunit; part of the 5S rRNA/L5/L18/L25 subcomplex. Contacts the 5S rRNA. Binds to the 5S rRNA independently of L5 and L18.

Its function is as follows. This is one of the proteins that binds to the 5S RNA in the ribosome where it forms part of the central protuberance. In Alkalilimnicola ehrlichii (strain ATCC BAA-1101 / DSM 17681 / MLHE-1), this protein is Large ribosomal subunit protein bL25.